The primary structure comprises 66 residues: Large ribosomal subunit protein bL35 (66 aa).

It belongs to the bacterial ribosomal protein bL35 family.

The polypeptide is Large ribosomal subunit protein bL35 (Ruegeria pomeroyi (strain ATCC 700808 / DSM 15171 / DSS-3) (Silicibacter pomeroyi)).